The primary structure comprises 460 residues: Probable asparagine--tRNA ligase, mitochondrial (460 aa).

Belongs to the class-II aminoacyl-tRNA synthetase family.

The protein resides in the mitochondrion matrix. It catalyses the reaction tRNA(Asn) + L-asparagine + ATP = L-asparaginyl-tRNA(Asn) + AMP + diphosphate + H(+). The protein is Probable asparagine--tRNA ligase, mitochondrial (asnS2) of Dictyostelium discoideum (Social amoeba).